The sequence spans 86 residues: Neurotoxin LmNaTx17 (86 aa).

The N-terminal stretch at 1–18 (MKILFVIVLAAFFIGVHC) is a signal peptide. The 67-residue stretch at 19 to 85 (KHGYPVQYSG…TWDYKTGKCR (67 aa)) folds into the LCN-type CS-alpha/beta domain. Disulfide bonds link cysteine 33-cysteine 84, cysteine 37-cysteine 58, cysteine 44-cysteine 65, and cysteine 48-cysteine 67.

The protein belongs to the long (4 C-C) scorpion toxin superfamily. Sodium channel inhibitor family. Beta subfamily. Expressed by the venom gland.

The protein localises to the secreted. Functionally, binds voltage-independently at site-4 of sodium channels (Nav) and shift the voltage of activation toward more negative potentials thereby affecting sodium channel activation and promoting spontaneous and repetitive firing. The polypeptide is Neurotoxin LmNaTx17 (Lychas mucronatus (Chinese swimming scorpion)).